Here is a 231-residue protein sequence, read N- to C-terminus: Ribonuclease 3 (231 aa).

Residues 3–130 (MHEFFENFGI…VTAAIYLDQT (128 aa)) form the RNase III domain. E43 contacts Mg(2+). D47 is a catalytic residue. Mg(2+)-binding residues include D116 and E119. The active site involves E119. One can recognise a DRBM domain in the interval 157 to 228 (DYKSELQEII…AKDCLNKLKK (72 aa)).

This sequence belongs to the ribonuclease III family. In terms of assembly, homodimer. Mg(2+) is required as a cofactor.

It is found in the cytoplasm. It carries out the reaction Endonucleolytic cleavage to 5'-phosphomonoester.. Its function is as follows. Digests double-stranded RNA. Involved in the processing of primary rRNA transcript to yield the immediate precursors to the large and small rRNAs (23S and 16S). Processes some mRNAs, and tRNAs when they are encoded in the rRNA operon. Processes pre-crRNA and tracrRNA of type II CRISPR loci if present in the organism. The protein is Ribonuclease 3 of Mesoplasma florum (strain ATCC 33453 / NBRC 100688 / NCTC 11704 / L1) (Acholeplasma florum).